The sequence spans 233 residues: 3,4-dihydroxy-2-butanone 4-phosphate synthase (233 aa).

Residue Glu37 participates in Mg(2+) binding. Mn(2+) is bound at residue Glu37. Position 41 (Asp41) interacts with D-ribulose 5-phosphate. Cys66 is subject to S-glutathionyl cysteine. D-ribulose 5-phosphate contacts are provided by residues Thr92 and 150-154 (RRGHT). Residue His153 participates in Mg(2+) binding. His153 provides a ligand contact to Mn(2+).

Homodimer. The cofactor is Mg(2+). Mn(2+) serves as cofactor. In terms of processing, S-glutathionylation is reversible and dependent on a glutaredoxin.

The enzyme catalyses D-ribulose 5-phosphate = (2S)-2-hydroxy-3-oxobutyl phosphate + formate + H(+). It functions in the pathway cofactor biosynthesis; riboflavin biosynthesis; 2-hydroxy-3-oxobutyl phosphate from D-ribulose 5-phosphate: step 1/1. Catalyzes the conversion of D-ribulose 5-phosphate to formate and 3,4-dihydroxy-2-butanone 4-phosphate. This chain is 3,4-dihydroxy-2-butanone 4-phosphate synthase (RIB3), found in Pyricularia oryzae (strain 70-15 / ATCC MYA-4617 / FGSC 8958) (Rice blast fungus).